The chain runs to 312 residues: Dehydrogenase/reductase SDR family member 7C (312 aa).

The first 18 residues, methionine 1–glycine 18, serve as a signal peptide directing secretion. The NAD(+) site is built by serine 47, leucine 49, tyrosine 192, lysine 196, and serine 227. Catalysis depends on tyrosine 192, which acts as the Proton acceptor.

It belongs to the short-chain dehydrogenases/reductases (SDR) family.

Its subcellular location is the sarcoplasmic reticulum membrane. The catalysed reaction is all-trans-retinol + NAD(+) = all-trans-retinal + NADH + H(+). NADH-dependent oxidoreductase which catalyzes the oxidation of all-trans-retinol to all-trans-retinal. Plays a role in the regulation of cardiac and skeletal muscle metabolic functions. Maintains Ca(2+) intracellular homeostasis by repressing Ca(2+) release from the sarcoplasmic reticulum (SR) in myotubes, possibly through local alternations in NAD/NADH or retinol/retinal. Also plays a role in Ca(2+) homeostasis by controlling Ca(2+) overload in the cytosol and the SR in myotubes. Involved in glucose uptake into skeletal muscles and muscle performance by activating PI3K and mTORC2-mediated AKT1 phosphorylation signaling pathways, possibly through the action of its downstream catalytic product all-trans-retinoic acid. The chain is Dehydrogenase/reductase SDR family member 7C from Homo sapiens (Human).